Consider the following 757-residue polypeptide: RNA-directed RNA polymerase catalytic subunit (757 aa).

Residues 53 to 82 (GRWTKNTETGAPQLNPIDGPLPKDNEPSGY) form a disordered region. Short sequence motifs (nuclear localization signal) lie at residues 187–195 (RKRRVRDNV) and 203–216 (RTIG…NKRS). Residues 249-256 (RGFVYFVE) form a promoter-binding site region. The region spanning 286–483 (VRKMMTNSQD…GINMSKKKSY (198 aa)) is the RdRp catalytic domain.

Belongs to the influenza viruses polymerase PB1 family. Influenza RNA polymerase is composed of three subunits: PB1, PB2 and PA. Interacts (via N-terminus) with PA (via C-terminus). Interacts (via C-terminus) with PB2 (via N-terminus); this interaction is essential for transcription initiation. Interacts (via C-terminus) with human PKP2 (via N-terminus); the interaction competitively inhibits the interaction between the RNA polymerase subunits PB1 and PB2. In terms of processing, phosphorylated by host PRKCA.

The protein localises to the host nucleus. It is found in the host cytoplasm. The enzyme catalyses RNA(n) + a ribonucleoside 5'-triphosphate = RNA(n+1) + diphosphate. In terms of biological role, RNA-dependent RNA polymerase which is responsible for replication and transcription of virus RNA segments. The transcription of viral mRNAs occurs by a unique mechanism called cap-snatching. 5' methylated caps of cellular mRNAs are cleaved after 10-13 nucleotides by PA. In turn, these short capped RNAs are used as primers by PB1 for transcription of viral mRNAs. During virus replication, PB1 initiates RNA synthesis and copy vRNA into complementary RNA (cRNA) which in turn serves as a template for the production of more vRNAs. This Influenza A virus (strain A/India/6263/1980 H1N1) protein is RNA-directed RNA polymerase catalytic subunit.